Here is a 492-residue protein sequence, read N- to C-terminus: Thyroid hormone receptor alpha (492 aa).

The interval M1–C33 is disordered. The interval M1–Q52 is modulating. Residues C53, C56, C70, C73, C91, C97, C107, and C110 each contribute to the Zn(2+) site. 2 consecutive NR C4-type zinc fingers follow at residues C53–C73 and C91–C115. The segment at residues C53–D127 is a DNA-binding region (nuclear receptor). In terms of domain architecture, NR LBD spans E163–V407. R228 and S277 together coordinate 3,3',5-triiodo-L-thyronine. The interval A457 to P492 is disordered.

This sequence belongs to the nuclear hormone receptor family. NR1 subfamily. Binds DNA as a dimer; homodimer and heterodimer with RXRB. Interacts with NCOA3 and NCOA6 coactivators, leading to a strong increase of transcription of target genes. Probably interacts with SFPQ. Interacts with C1D. Interacts with AKAP13. Interacts with TP53INP2. Interacts with PER2. Isoform alpha-2 and isoform alpha-1 interact with TACC1, but the interaction with alpha-1 is weaker. The interaction with isoform alpha-1, but not alpha-2, is decreased in the presence of thyroid hormone T3.

The protein resides in the nucleus. The protein localises to the cytoplasm. Its function is as follows. Nuclear hormone receptor that can act as a repressor or activator of transcription. High affinity receptor for thyroid hormones, including triiodothyronine and thyroxine. In Rattus norvegicus (Rat), this protein is Thyroid hormone receptor alpha (Thra).